The sequence spans 158 residues: 6,7-dimethyl-8-ribityllumazine synthase (158 aa).

Residues Phe18, 50–52 (SYD), and 74–76 (AVI) contribute to the 5-amino-6-(D-ribitylamino)uracil site. 79–80 (ET) contacts (2S)-2-hydroxy-3-oxobutyl phosphate. Catalysis depends on His82, which acts as the Proton donor. 5-amino-6-(D-ribitylamino)uracil is bound at residue Leu107. Residue Arg122 participates in (2S)-2-hydroxy-3-oxobutyl phosphate binding.

The protein belongs to the DMRL synthase family.

The enzyme catalyses (2S)-2-hydroxy-3-oxobutyl phosphate + 5-amino-6-(D-ribitylamino)uracil = 6,7-dimethyl-8-(1-D-ribityl)lumazine + phosphate + 2 H2O + H(+). It functions in the pathway cofactor biosynthesis; riboflavin biosynthesis; riboflavin from 2-hydroxy-3-oxobutyl phosphate and 5-amino-6-(D-ribitylamino)uracil: step 1/2. Its function is as follows. Catalyzes the formation of 6,7-dimethyl-8-ribityllumazine by condensation of 5-amino-6-(D-ribitylamino)uracil with 3,4-dihydroxy-2-butanone 4-phosphate. This is the penultimate step in the biosynthesis of riboflavin. This Sulfolobus acidocaldarius (strain ATCC 33909 / DSM 639 / JCM 8929 / NBRC 15157 / NCIMB 11770) protein is 6,7-dimethyl-8-ribityllumazine synthase.